Here is a 327-residue protein sequence, read N- to C-terminus: Interleukin-12 subunit beta (327 aa).

The first 22 residues, 1 to 22 (MCHQKLTISWFAMVLLVSPLMA), serve as a signal peptide directing secretion. The Ig-like C2-type domain maps to 23–106 (IWELEKDVYV…LSHSRLLLHK (84 aa)). Cys50 and Cys90 form a disulfide bridge. Asn125, Asn135, Asn223, and Asn315 each carry an N-linked (GlcNAc...) asparagine glycan. The region spanning 238-327 (PPKNLQLKPL…WSEWASVSCN (90 aa)) is the Fibronectin type-III domain.

This sequence belongs to the IL-12B family. In terms of assembly, heterodimer with IL12A; disulfide-linked. The heterodimer is known as interleukin IL-12. Heterodimer with IL23A; disulfide-linked. The heterodimer is known as interleukin IL-23. Also secreted as a monomer. Interacts with NBR1; this interaction promotes IL-12 secretion.

It is found in the secreted. Functionally, cytokine that can act as a growth factor for activated T and NK cells, enhance the lytic activity of NK/lymphokine-activated killer cells, and stimulate the production of IFN-gamma by resting PBMC. Its function is as follows. Associates with IL23A to form the IL-23 interleukin, a heterodimeric cytokine which functions in innate and adaptive immunity. IL-23 may constitute with IL-17 an acute response to infection in peripheral tissues. IL-23 binds to a heterodimeric receptor complex composed of IL12RB1 and IL23R, activates the Jak-Stat signaling cascade, stimulates memory rather than naive T-cells and promotes production of pro-inflammatory cytokines. IL-23 induces autoimmune inflammation and thus may be responsible for autoimmune inflammatory diseases and may be important for tumorigenesis. This Sigmodon hispidus (Hispid cotton rat) protein is Interleukin-12 subunit beta (IL12B).